The primary structure comprises 968 residues: Alanine--tRNA ligase, cytoplasmic (968 aa).

Methionine 1 is subject to N-acetylmethionine. ATP-binding positions include arginine 77, histidine 95, tryptophan 176, and 214-216 (IWN). Residues asparagine 216 and aspartate 239 each contribute to the L-alanine site. An ATP-binding site is contributed by glycine 243. 2 positions are modified to phosphoserine: serine 399 and serine 555. Zn(2+) contacts are provided by histidine 605, histidine 609, cysteine 723, and histidine 727. The short motif at 750 to 763 (RRIVAVTGAEAQKA) is the Nuclear localization signal element. Lysine 876 is subject to N6-acetyllysine. Residue lysine 943 is modified to N6,N6,N6-trimethyllysine; alternate. Lysine 943 bears the N6,N6-dimethyllysine; alternate mark. Lysine 943 is subject to N6-methyllysine; alternate.

It belongs to the class-II aminoacyl-tRNA synthetase family. Monomer. Interacts with ANKRD16; the interaction is direct. Requires Zn(2+) as cofactor. ISGylated. Post-translationally, methylation at 'Lys-943' by METTL21C.

The protein resides in the cytoplasm. The protein localises to the nucleus. It carries out the reaction tRNA(Ala) + L-alanine + ATP = L-alanyl-tRNA(Ala) + AMP + diphosphate. The enzyme catalyses (S)-lactate + ATP + H(+) = (S)-lactoyl-AMP + diphosphate. The catalysed reaction is (S)-lactoyl-AMP + L-lysyl-[protein] = N(6)-[(S)-lactoyl]-L-lysyl-[protein] + AMP + 2 H(+). Its activity is regulated as follows. The protein lactyltransferase activity is inhibited by beta-alanine. In terms of biological role, catalyzes the attachment of alanine to tRNA(Ala) in a two-step reaction: alanine is first activated by ATP to form Ala-AMP and then transferred to the acceptor end of tRNA(Ala). Also edits incorrectly charged tRNA(Ala) via its editing domain. In presence of high levels of lactate, also acts as a protein lactyltransferase that mediates lactylation of lysine residues in target proteins, such as TEAD1, TP53/p53 and YAP1. Protein lactylation takes place in a two-step reaction: lactate is first activated by ATP to form lactate-AMP and then transferred to lysine residues of target proteins. Acts as an inhibitor of TP53/p53 activity by catalyzing lactylation of TP53/p53. Acts as a positive regulator of the Hippo pathway by mediating lactylation of TEAD1 and YAP1. The sequence is that of Alanine--tRNA ligase, cytoplasmic from Mus musculus (Mouse).